The chain runs to 158 residues: Small ribosomal subunit protein uS9 (158 aa).

The protein belongs to the universal ribosomal protein uS9 family.

The chain is Small ribosomal subunit protein uS9 from Brucella melitensis biotype 2 (strain ATCC 23457).